We begin with the raw amino-acid sequence, 144 residues long: Large ribosomal subunit protein uL16 (144 aa).

The protein belongs to the universal ribosomal protein uL16 family. As to quaternary structure, part of the 50S ribosomal subunit.

In terms of biological role, binds 23S rRNA and is also seen to make contacts with the A and possibly P site tRNAs. The protein is Large ribosomal subunit protein uL16 of Bacillus subtilis (strain 168).